Here is a 301-residue protein sequence, read N- to C-terminus: MKIAILSRNQNLYSTKRLKEAGESLGHEVDVIDTLHCYMDISSNRPAVRFKGEALPYYDAIIPRIGASVTFYGTAVVRQFEMMGTFSINESVAISRSRDKLRSMQLLSRKGIGMPRTGFARQPDRIDDLIKNVGGAPVVIKLLEGTQGIGVVLADTQKAAESIIEAFMGLNANILVQEYIKEAGGADIRCLVVGGKVVAAMKRQAAAGEFRSNLHRGGSASLVRLSPQERKTAIDAAKTMGLNMCGVDILRSNNGPVVMEVNSSPGLEGIETATGKDVASMIIEFIVKNAKPNNTKTRGKG.

Residues 104-287 enclose the ATP-grasp domain; it reads MQLLSRKGIG…VASMIIEFIV (184 aa). Residues Lys141, 178–179, Asp187, and 211–213 contribute to the ATP site; these read EY and RSN. Asp248, Glu260, and Asn262 together coordinate Mg(2+). Mn(2+)-binding residues include Asp248, Glu260, and Asn262.

This sequence belongs to the RimK family. It depends on Mg(2+) as a cofactor. The cofactor is Mn(2+).

This chain is Probable alpha-L-glutamate ligase 2, found in Pseudoalteromonas atlantica (strain T6c / ATCC BAA-1087).